Here is a 245-residue protein sequence, read N- to C-terminus: MAPK-interacting and spindle-stabilizing protein-like (245 aa).

The segment at Met-1 to His-245 is disordered. Position 2 is an N-acetylserine (Ser-2). Residues Ser-2, Ser-6, and Ser-15 each carry the phosphoserine modification. The segment covering Ala-17 to Lys-26 has biased composition (polar residues). The segment covering Trp-34–Ser-51 has biased composition (low complexity). Pro residues-rich tracts occupy residues Ser-74–Pro-127, Pro-164–Pro-190, and Ala-198–Ala-207.

The protein belongs to the MISS family.

This chain is MAPK-interacting and spindle-stabilizing protein-like (MAPK1IP1L), found in Homo sapiens (Human).